Here is a 569-residue protein sequence, read N- to C-terminus: Synaptotagmin-4 (569 aa).

The helical transmembrane segment at 1 to 21 (MGFLFGLFIGIAVSFGLVVAF) threads the bilayer. The SMP-LTD domain occupies 67 to 251 (QRQKLNWLNL…WPVRKIIPIL (185 aa)). The tract at residues 229–531 (EETIRDAIED…KIGRVIMTLT (303 aa)) is phospholipid binding. C2 domains follow at residues 245–366 (RKII…DIWL) and 426–543 (TDMK…QEWF). Asp459, Asp465, Asp514, Asp516, and Asp521 together coordinate Ca(2+).

Belongs to the synaptotagmin family. The cofactor is Ca(2+).

It is found in the membrane. Its function is as follows. May be involved in membrane trafficking. This Arabidopsis thaliana (Mouse-ear cress) protein is Synaptotagmin-4 (SYT4).